A 73-amino-acid chain; its full sequence is MPKTFYEFLMTQRNPESYEPVASFANNAFLDSAFPKQETQFEPLSKYLEENAPYLPSMTIFDDAWQLYLAALA.

This sequence belongs to the UPF0346 family.

This is UPF0346 protein LVIS_0790 from Levilactobacillus brevis (strain ATCC 367 / BCRC 12310 / CIP 105137 / JCM 1170 / LMG 11437 / NCIMB 947 / NCTC 947) (Lactobacillus brevis).